A 285-amino-acid polypeptide reads, in one-letter code: Bifunctional protein FolD (285 aa).

NADP(+)-binding positions include 165–167 (GRS) and Ser-190.

It belongs to the tetrahydrofolate dehydrogenase/cyclohydrolase family. As to quaternary structure, homodimer.

It carries out the reaction (6R)-5,10-methylene-5,6,7,8-tetrahydrofolate + NADP(+) = (6R)-5,10-methenyltetrahydrofolate + NADPH. It catalyses the reaction (6R)-5,10-methenyltetrahydrofolate + H2O = (6R)-10-formyltetrahydrofolate + H(+). It functions in the pathway one-carbon metabolism; tetrahydrofolate interconversion. Functionally, catalyzes the oxidation of 5,10-methylenetetrahydrofolate to 5,10-methenyltetrahydrofolate and then the hydrolysis of 5,10-methenyltetrahydrofolate to 10-formyltetrahydrofolate. In Burkholderia orbicola (strain AU 1054), this protein is Bifunctional protein FolD.